The chain runs to 348 residues: Probable purine nucleoside permease C285.05 (348 aa).

A signal peptide spans 1–21; the sequence is MLFLKLVASVLALMTIVPAQA.

It belongs to the NUP family.

The protein resides in the endoplasmic reticulum. Probable nucleoside permease that transports adenosine and guanosine. This Schizosaccharomyces pombe (strain 972 / ATCC 24843) (Fission yeast) protein is Probable purine nucleoside permease C285.05.